The following is a 743-amino-acid chain: Phosphoribosylformylglycinamidine synthase subunit PurL (743 aa).

The active site involves His-54. 2 residues coordinate ATP: Tyr-57 and Lys-96. Residue Glu-98 participates in Mg(2+) binding. Substrate contacts are provided by residues 99-102 (SHNH) and Arg-121. Residue His-100 is the Proton acceptor of the active site. Mg(2+) is bound at residue Asp-122. Gln-245 contacts substrate. Asp-273 contacts Mg(2+). 317–319 (ESQ) contributes to the substrate binding site. Asp-501 and Gly-538 together coordinate ATP. Position 539 (Asn-539) interacts with Mg(2+). Ser-541 is a substrate binding site.

The protein belongs to the FGAMS family. Monomer. Part of the FGAM synthase complex composed of 1 PurL, 1 PurQ and 2 PurS subunits.

It is found in the cytoplasm. The enzyme catalyses N(2)-formyl-N(1)-(5-phospho-beta-D-ribosyl)glycinamide + L-glutamine + ATP + H2O = 2-formamido-N(1)-(5-O-phospho-beta-D-ribosyl)acetamidine + L-glutamate + ADP + phosphate + H(+). The protein operates within purine metabolism; IMP biosynthesis via de novo pathway; 5-amino-1-(5-phospho-D-ribosyl)imidazole from N(2)-formyl-N(1)-(5-phospho-D-ribosyl)glycinamide: step 1/2. In terms of biological role, part of the phosphoribosylformylglycinamidine synthase complex involved in the purines biosynthetic pathway. Catalyzes the ATP-dependent conversion of formylglycinamide ribonucleotide (FGAR) and glutamine to yield formylglycinamidine ribonucleotide (FGAM) and glutamate. The FGAM synthase complex is composed of three subunits. PurQ produces an ammonia molecule by converting glutamine to glutamate. PurL transfers the ammonia molecule to FGAR to form FGAM in an ATP-dependent manner. PurS interacts with PurQ and PurL and is thought to assist in the transfer of the ammonia molecule from PurQ to PurL. The polypeptide is Phosphoribosylformylglycinamidine synthase subunit PurL (Halalkalibacterium halodurans (strain ATCC BAA-125 / DSM 18197 / FERM 7344 / JCM 9153 / C-125) (Bacillus halodurans)).